A 270-amino-acid polypeptide reads, in one-letter code: Imidazole glycerol phosphate synthase subunit HisF (270 aa).

Residues D11 and D130 contribute to the active site.

It belongs to the HisA/HisF family. As to quaternary structure, heterodimer of HisH and HisF.

The protein resides in the cytoplasm. It catalyses the reaction 5-[(5-phospho-1-deoxy-D-ribulos-1-ylimino)methylamino]-1-(5-phospho-beta-D-ribosyl)imidazole-4-carboxamide + L-glutamine = D-erythro-1-(imidazol-4-yl)glycerol 3-phosphate + 5-amino-1-(5-phospho-beta-D-ribosyl)imidazole-4-carboxamide + L-glutamate + H(+). It participates in amino-acid biosynthesis; L-histidine biosynthesis; L-histidine from 5-phospho-alpha-D-ribose 1-diphosphate: step 5/9. Its function is as follows. IGPS catalyzes the conversion of PRFAR and glutamine to IGP, AICAR and glutamate. The HisF subunit catalyzes the cyclization activity that produces IGP and AICAR from PRFAR using the ammonia provided by the HisH subunit. In Chloroflexus aggregans (strain MD-66 / DSM 9485), this protein is Imidazole glycerol phosphate synthase subunit HisF.